Here is a 566-residue protein sequence, read N- to C-terminus: Arginine--tRNA ligase (566 aa).

The 'HIGH' region signature appears at 121 to 131; it reads ANPNGPFHIGH.

This sequence belongs to the class-I aminoacyl-tRNA synthetase family.

It localises to the cytoplasm. The enzyme catalyses tRNA(Arg) + L-arginine + ATP = L-arginyl-tRNA(Arg) + AMP + diphosphate. This is Arginine--tRNA ligase from Methanococcus maripaludis (strain C7 / ATCC BAA-1331).